The sequence spans 299 residues: Ankyrin repeat domain-containing protein 54 (299 aa).

A disordered region spans residues 1–32; it reads MAAAAGGADDESRSGRSSSDGECAVAPEPLTG. Residue A2 is modified to N-acetylalanine. Phosphoserine occurs at positions 57 and 62. The short motif at 98–116 is the Nuclear localization signal (NLS) element; it reads RRLGPTGKEVHALKRLRDS. ANK repeat units follow at residues 108–137, 141–170, 174–203, and 207–239; these read HALK…DPCA, KGRT…DPNQ, LGNT…RVDA, and AGRT…EVKQ. The tract at residues 140–240 is LYN-binding; sequence DKGRTALHFA…EAVRLEVKQI (101 aa). A Nuclear export signal (NES) motif is present at residues 282 to 292; the sequence is LLASFTSLSLQ.

Interacts (via ankyrin repeat region) with LYN (via SH3-domain) in an activation-independent status of LYN. Forms a multiprotein complex with LYN and HCLS1. Interacts with TSN2, VAV1, DBNL and LASP1.

The protein localises to the nucleus. The protein resides in the cytoplasm. Its subcellular location is the midbody. Plays an important role in regulating intracellular signaling events associated with erythroid terminal differentiation. This Bos taurus (Bovine) protein is Ankyrin repeat domain-containing protein 54 (ANKRD54).